The chain runs to 90 residues: DNA-directed RNA polymerase subunit omega (90 aa).

It belongs to the RNA polymerase subunit omega family. In terms of assembly, the RNAP catalytic core consists of 2 alpha, 1 beta, 1 beta' and 1 omega subunit. When a sigma factor is associated with the core the holoenzyme is formed, which can initiate transcription.

It carries out the reaction RNA(n) + a ribonucleoside 5'-triphosphate = RNA(n+1) + diphosphate. Functionally, promotes RNA polymerase assembly. Latches the N- and C-terminal regions of the beta' subunit thereby facilitating its interaction with the beta and alpha subunits. The polypeptide is DNA-directed RNA polymerase subunit omega (Histophilus somni (strain 129Pt) (Haemophilus somnus)).